A 297-amino-acid polypeptide reads, in one-letter code: MLDNKDIATPSRMRALLDKYGFNFKKSLGQNFLIDVNIINNIIDASDIDAQTGVIEIGPGMGSLTEQLARHAKRVLAFEIDQRLIPVLNDTLSPYDNVTVINEDILKANIKEAVENHLQDCEKIMVVANLPYYITTPILLNLMQQDIPIDGYVVMMQKEVGERLNAEVGSKAYGSLSIVVQYYTETSKVLTVPKSVFMPPPNVDSIVVKLMQRTEPLVTVDNEEAFFKLAKAAFAQRRKTINNNYQNYFKDGKQHKEVILQWLEQAGIDPRRRGETLSIQDFAKLYEEKKKFPQLEN.

Asn31, Leu33, Gly58, Glu79, Asp104, and Asn129 together coordinate S-adenosyl-L-methionine.

Belongs to the class I-like SAM-binding methyltransferase superfamily. rRNA adenine N(6)-methyltransferase family. RsmA subfamily.

It localises to the cytoplasm. The enzyme catalyses adenosine(1518)/adenosine(1519) in 16S rRNA + 4 S-adenosyl-L-methionine = N(6)-dimethyladenosine(1518)/N(6)-dimethyladenosine(1519) in 16S rRNA + 4 S-adenosyl-L-homocysteine + 4 H(+). In terms of biological role, specifically dimethylates two adjacent adenosines (A1518 and A1519) in the loop of a conserved hairpin near the 3'-end of 16S rRNA in the 30S particle. May play a critical role in biogenesis of 30S subunits. This is Ribosomal RNA small subunit methyltransferase A from Staphylococcus aureus (strain bovine RF122 / ET3-1).